A 464-amino-acid polypeptide reads, in one-letter code: GTPase Der (464 aa).

EngA-type G domains follow at residues 3 to 166 (PTIA…AVES) and 177 to 350 (LKMA…QAAT). GTP contacts are provided by residues 9–16 (GRPNVGKS), 56–60 (DTGGI), 118–121 (NKVD), 183–190 (GRPNVGKS), 230–234 (DTAGV), and 295–298 (NKWD). Positions 351–435 (EKYSTSFLTR…PVRIEYRSGD (85 aa)) constitute a KH-like domain.

Belongs to the TRAFAC class TrmE-Era-EngA-EngB-Septin-like GTPase superfamily. EngA (Der) GTPase family. In terms of assembly, associates with the 50S ribosomal subunit.

Its function is as follows. GTPase that plays an essential role in the late steps of ribosome biogenesis. This Teredinibacter turnerae (strain ATCC 39867 / T7901) protein is GTPase Der.